Reading from the N-terminus, the 80-residue chain is Serine palmitoyltransferase-regulating protein TSC3 (80 aa).

Residues 54-74 traverse the membrane as a helical segment; it reads FDSFFLHVFFLTIFSLSFFGI.

As to quaternary structure, interacts with the serine palmitoyltransferase complex LCB1-LCB2. Component of the SPOTS complex, at least composed of LCB1/2 (LCB1 and/or LCB2), ORM1/2 (ORM1 and/or ORM2), SAC1 and TSC3.

The protein localises to the endoplasmic reticulum membrane. In terms of biological role, stimulates the activity of serine palmitoyltransferase (SPT), and thus plays a role in the biosynthesis of sphingolipids. The polypeptide is Serine palmitoyltransferase-regulating protein TSC3 (TSC3) (Saccharomyces cerevisiae (strain ATCC 204508 / S288c) (Baker's yeast)).